The chain runs to 139 residues: Thyrotropin subunit beta (139 aa).

The N-terminal stretch at 1–20 (MELSVAMCGLLCLLFSQAVP) is a signal peptide. 6 cysteine pairs are disulfide-bonded: Cys-22–Cys-72, Cys-36–Cys-87, Cys-39–Cys-127, Cys-47–Cys-103, Cys-51–Cys-105, and Cys-108–Cys-115. A glycan (N-linked (GlcNAc...) asparagine) is linked at Asn-43.

It belongs to the glycoprotein hormones subunit beta family. Heterodimer of a common alpha chain and a unique beta chain which confers biological specificity to thyrotropin, lutropin, follitropin and gonadotropin.

Its subcellular location is the secreted. Its function is as follows. Indispensable for the control of thyroid structure and metabolism. May play some role in the biological processes of the immature fishes. The protein is Thyrotropin subunit beta (tshb) of Salmo salar (Atlantic salmon).